A 263-amino-acid polypeptide reads, in one-letter code: Small ribosomal subunit protein eS4, X isoform (263 aa).

Residues 42-104 (LPLIIFLRNR…TGEHFRLVYD (63 aa)) enclose the S4 RNA-binding domain. Lysine 230 is covalently cross-linked (Glycyl lysine isopeptide (Lys-Gly) (interchain with G-Cter in SUMO2)). N6-acetyllysine is present on lysine 233.

It belongs to the eukaryotic ribosomal protein eS4 family. Component of the small ribosomal subunit. Part of the small subunit (SSU) processome, composed of more than 70 proteins and the RNA chaperone small nucleolar RNA (snoRNA) U3. Identified in a IGF2BP1-dependent mRNP granule complex containing untranslated mRNAs.

The protein localises to the cytoplasm. It localises to the nucleus. The protein resides in the nucleolus. Its function is as follows. Component of the small ribosomal subunit. The ribosome is a large ribonucleoprotein complex responsible for the synthesis of proteins in the cell. Part of the small subunit (SSU) processome, first precursor of the small eukaryotic ribosomal subunit. During the assembly of the SSU processome in the nucleolus, many ribosome biogenesis factors, an RNA chaperone and ribosomal proteins associate with the nascent pre-rRNA and work in concert to generate RNA folding, modifications, rearrangements and cleavage as well as targeted degradation of pre-ribosomal RNA by the RNA exosome. The protein is Small ribosomal subunit protein eS4, X isoform (RPS4X) of Monodelphis domestica (Gray short-tailed opossum).